Here is a 464-residue protein sequence, read N- to C-terminus: Soluble pyridine nucleotide transhydrogenase (464 aa).

35–44 serves as a coordination point for FAD; the sequence is DSRRQVGGNC.

Belongs to the class-I pyridine nucleotide-disulfide oxidoreductase family. It depends on FAD as a cofactor.

It is found in the cytoplasm. The enzyme catalyses NAD(+) + NADPH = NADH + NADP(+). Conversion of NADPH, generated by peripheral catabolic pathways, to NADH, which can enter the respiratory chain for energy generation. The polypeptide is Soluble pyridine nucleotide transhydrogenase (Pseudomonas putida (strain W619)).